A 90-amino-acid chain; its full sequence is uncharacterized protein (90 aa).

The first 18 residues, 1–18 (MSRALFAVVLAFPLIALA), serve as a signal peptide directing secretion.

This is an uncharacterized protein from Escherichia coli (strain K12).